Reading from the N-terminus, the 123-residue chain is Small ribosomal subunit protein uS13 (123 aa).

Positions 95–123 (GLPVRGQKTKTNARTRKGPKRAISGKKNK) are disordered.

It belongs to the universal ribosomal protein uS13 family. In terms of assembly, part of the 30S ribosomal subunit. Forms a loose heterodimer with protein S19. Forms two bridges to the 50S subunit in the 70S ribosome.

Located at the top of the head of the 30S subunit, it contacts several helices of the 16S rRNA. In the 70S ribosome it contacts the 23S rRNA (bridge B1a) and protein L5 of the 50S subunit (bridge B1b), connecting the 2 subunits; these bridges are implicated in subunit movement. Contacts the tRNAs in the A and P-sites. The polypeptide is Small ribosomal subunit protein uS13 (Clostridium novyi (strain NT)).